The primary structure comprises 442 residues: Protein translocase subunit SecF (442 aa).

The segment at 1–39 is disordered; sequence MASKAKTGRDDEATSAVELTEATESAVARTDGDSTTDTA. Transmembrane regions (helical) follow at residues 67-87, 187-207, 218-238, 243-263, 301-321, and 331-351; these read WFGV…FRGF, ITKK…LYIT, AITA…LVGF, ATVI…VIVF, LIGV…LGVG, and LIGI…LLVT. The disordered stretch occupies residues 366 to 442; it reads VLKRRNSGSP…PTGKRNAGRR (77 aa). Over residues 402–432 the composition is skewed to low complexity; that stretch reads QASSQSAPRAAQGSSKPAPGARPVRPVGTRR. Residues 433-442 are compositionally biased toward basic residues; it reads PTGKRNAGRR.

This sequence belongs to the SecD/SecF family. SecF subfamily. In terms of assembly, forms a complex with SecD. Part of the essential Sec protein translocation apparatus which comprises SecA, SecYEG and auxiliary proteins SecDF. Other proteins may also be involved.

The protein localises to the cell membrane. In terms of biological role, part of the Sec protein translocase complex. Interacts with the SecYEG preprotein conducting channel. SecDF uses the proton motive force (PMF) to complete protein translocation after the ATP-dependent function of SecA. The sequence is that of Protein translocase subunit SecF from Mycobacterium tuberculosis (strain CDC 1551 / Oshkosh).